Consider the following 159-residue polypeptide: Phosphopantetheine adenylyltransferase (159 aa).

A substrate-binding site is contributed by S8. Residues 8–9 (SF) and H16 each bind ATP. Residues K40, T72, and R86 each contribute to the substrate site. Residues 87–89 (GLR), E97, and 122–128 (YSFLSSS) contribute to the ATP site.

This sequence belongs to the bacterial CoaD family. As to quaternary structure, homohexamer. It depends on Mg(2+) as a cofactor.

The protein resides in the cytoplasm. It carries out the reaction (R)-4'-phosphopantetheine + ATP + H(+) = 3'-dephospho-CoA + diphosphate. The protein operates within cofactor biosynthesis; coenzyme A biosynthesis; CoA from (R)-pantothenate: step 4/5. In terms of biological role, reversibly transfers an adenylyl group from ATP to 4'-phosphopantetheine, yielding dephospho-CoA (dPCoA) and pyrophosphate. The sequence is that of Phosphopantetheine adenylyltransferase from Synechocystis sp. (strain ATCC 27184 / PCC 6803 / Kazusa).